We begin with the raw amino-acid sequence, 292 residues long: Elongation factor Ts (292 aa).

The segment at 81–84 is involved in Mg(2+) ion dislocation from EF-Tu; it reads TDFV.

It belongs to the EF-Ts family.

It is found in the cytoplasm. Functionally, associates with the EF-Tu.GDP complex and induces the exchange of GDP to GTP. It remains bound to the aminoacyl-tRNA.EF-Tu.GTP complex up to the GTP hydrolysis stage on the ribosome. The polypeptide is Elongation factor Ts (Alkalilimnicola ehrlichii (strain ATCC BAA-1101 / DSM 17681 / MLHE-1)).